We begin with the raw amino-acid sequence, 275 residues long: MRKYQEEIINALGVNSQIDPQAEVTKRVQFICDFLQTTKMKALVLGISGGQDSSLAGRLSQLAVEKLREETGDNEYQFIAVRLPYGEQADESDAMFAINDFIKPDKIMRVNIKAATDAMVASLNEAGTPISDFSKGNIKARERMIVQYAIGGENKGAVVGTDHAAEAVTGFYTKFGDGGADITPLSGLDKRQGKALLQYLGAPAKLYDKTPTADLEEDKPMRPDEEALGVRYDEIDDYLEGREVSPAAAEKIESWYRRTQHKRHLPIAPYDTWWK.

46–53 serves as a coordination point for ATP; sequence GISGGQDS. Asp-52 lines the Mg(2+) pocket. Arg-141 is a deamido-NAD(+) binding site. Thr-161 provides a ligand contact to ATP. Residue Glu-166 coordinates Mg(2+). Residues Lys-174 and Asp-181 each contribute to the deamido-NAD(+) site. ATP contacts are provided by Lys-190 and Thr-212. 261 to 262 is a deamido-NAD(+) binding site; it reads HK.

The protein belongs to the NAD synthetase family. As to quaternary structure, homodimer.

The enzyme catalyses deamido-NAD(+) + NH4(+) + ATP = AMP + diphosphate + NAD(+) + H(+). It functions in the pathway cofactor biosynthesis; NAD(+) biosynthesis; NAD(+) from deamido-NAD(+) (ammonia route): step 1/1. In terms of biological role, catalyzes the ATP-dependent amidation of deamido-NAD to form NAD. Uses ammonia as a nitrogen source. This chain is NH(3)-dependent NAD(+) synthetase, found in Limosilactobacillus reuteri (strain DSM 20016) (Lactobacillus reuteri).